The chain runs to 177 residues: Peptide methionine sulfoxide reductase MsrA (177 aa).

Cys-12 is an active-site residue.

Belongs to the MsrA Met sulfoxide reductase family.

It catalyses the reaction L-methionyl-[protein] + [thioredoxin]-disulfide + H2O = L-methionyl-(S)-S-oxide-[protein] + [thioredoxin]-dithiol. It carries out the reaction [thioredoxin]-disulfide + L-methionine + H2O = L-methionine (S)-S-oxide + [thioredoxin]-dithiol. Functionally, has an important function as a repair enzyme for proteins that have been inactivated by oxidation. Catalyzes the reversible oxidation-reduction of methionine sulfoxide in proteins to methionine. This is Peptide methionine sulfoxide reductase MsrA from Halobacterium salinarum (strain ATCC 29341 / DSM 671 / R1).